The chain runs to 319 residues: Phospho-N-acetylmuramoyl-pentapeptide-transferase (319 aa).

The next 9 helical transmembrane spans lie at leucine 5–tryptophan 25, threonine 51–tyrosine 71, valine 79–leucine 99, leucine 119–tyrosine 139, valine 149–leucine 169, leucine 173–phenylalanine 193, asparagine 197–phenylalanine 217, isoleucine 224–glycine 246, and valine 299–glycine 319.

This sequence belongs to the glycosyltransferase 4 family. MraY subfamily. The cofactor is Mg(2+).

It is found in the cell membrane. It catalyses the reaction UDP-N-acetyl-alpha-D-muramoyl-L-alanyl-gamma-D-glutamyl-L-lysyl-D-alanyl-D-alanine + di-trans,octa-cis-undecaprenyl phosphate = Mur2Ac(oyl-L-Ala-gamma-D-Glu-L-Lys-D-Ala-D-Ala)-di-trans,octa-cis-undecaprenyl diphosphate + UMP. It functions in the pathway cell wall biogenesis; peptidoglycan biosynthesis. Functionally, catalyzes the initial step of the lipid cycle reactions in the biosynthesis of the cell wall peptidoglycan: transfers peptidoglycan precursor phospho-MurNAc-pentapeptide from UDP-MurNAc-pentapeptide onto the lipid carrier undecaprenyl phosphate, yielding undecaprenyl-pyrophosphoryl-MurNAc-pentapeptide, known as lipid I. This is Phospho-N-acetylmuramoyl-pentapeptide-transferase from Lactobacillus delbrueckii subsp. bulgaricus (strain ATCC BAA-365 / Lb-18).